We begin with the raw amino-acid sequence, 495 residues long: 3-octaprenyl-4-hydroxybenzoate carboxy-lyase (495 aa).

Mn(2+) is bound at residue asparagine 172. Prenylated FMN-binding positions include 175-177, 189-191, and 194-195; these read IYR, RWL, and RG. Glutamate 238 contacts Mn(2+). Catalysis depends on aspartate 287, which acts as the Proton donor.

This sequence belongs to the UbiD family. In terms of assembly, homohexamer. The cofactor is prenylated FMN. It depends on Mn(2+) as a cofactor.

The protein localises to the cell membrane. The enzyme catalyses a 4-hydroxy-3-(all-trans-polyprenyl)benzoate + H(+) = a 2-(all-trans-polyprenyl)phenol + CO2. The protein operates within cofactor biosynthesis; ubiquinone biosynthesis. Its function is as follows. Catalyzes the decarboxylation of 3-octaprenyl-4-hydroxy benzoate to 2-octaprenylphenol, an intermediate step in ubiquinone biosynthesis. The chain is 3-octaprenyl-4-hydroxybenzoate carboxy-lyase from Marinobacter nauticus (strain ATCC 700491 / DSM 11845 / VT8) (Marinobacter aquaeolei).